A 221-amino-acid chain; its full sequence is MTRLVTATEMQQIDNYTIETIGMPQDVLIERAAMAVLDVIGAGRFDLSHVLVLAGLGNNGADGVAIARLLYAQGVNVSLQFVGNVSRAKDSVKRQLAIIEKHGLVRSEKSDFNEATLIIDAIFGVGLNNVLPEGLQKMIKAANHIDKPVIAVDVPTGIDATTGEVRGAALKAHTTVTFGFTKVGLTQQNGCYLSGNVILKDVGMLIPDDFEFSLQETLPVA.

The 201-residue stretch at 10 to 210 (MQQIDNYTIE…DVGMLIPDDF (201 aa)) folds into the YjeF N-terminal domain. (6S)-NADPHX is bound at residue 58–62 (NNGAD). The K(+) site is built by asparagine 59 and aspartate 120. (6S)-NADPHX contacts are provided by residues 124 to 130 (GVGLNNV) and aspartate 153. Threonine 156 provides a ligand contact to K(+).

It belongs to the NnrE/AIBP family. K(+) is required as a cofactor.

The enzyme catalyses (6R)-NADHX = (6S)-NADHX. It catalyses the reaction (6R)-NADPHX = (6S)-NADPHX. In terms of biological role, catalyzes the epimerization of the S- and R-forms of NAD(P)HX, a damaged form of NAD(P)H that is a result of enzymatic or heat-dependent hydration. This is a prerequisite for the S-specific NAD(P)H-hydrate dehydratase to allow the repair of both epimers of NAD(P)HX. This Leuconostoc mesenteroides subsp. mesenteroides (strain ATCC 8293 / DSM 20343 / BCRC 11652 / CCM 1803 / JCM 6124 / NCDO 523 / NBRC 100496 / NCIMB 8023 / NCTC 12954 / NRRL B-1118 / 37Y) protein is NAD(P)H-hydrate epimerase.